The following is a 160-amino-acid chain: 3-dehydroquinate dehydratase (160 aa).

Tyrosine 28 (proton acceptor) is an active-site residue. The substrate site is built by asparagine 79, histidine 85, and aspartate 92. Histidine 105 acts as the Proton donor in catalysis. Substrate-binding positions include 106-107 (MS) and arginine 116.

This sequence belongs to the type-II 3-dehydroquinase family. As to quaternary structure, homododecamer.

It catalyses the reaction 3-dehydroquinate = 3-dehydroshikimate + H2O. It participates in metabolic intermediate biosynthesis; chorismate biosynthesis; chorismate from D-erythrose 4-phosphate and phosphoenolpyruvate: step 3/7. Functionally, catalyzes a trans-dehydration via an enolate intermediate. The sequence is that of 3-dehydroquinate dehydratase from Gloeobacter violaceus (strain ATCC 29082 / PCC 7421).